We begin with the raw amino-acid sequence, 214 residues long: Redox-sensing transcriptional repressor Rex (214 aa).

The segment at residues 17–56 (LYYRIFKRFHADQVEKASSKQIADAMGIDSATVRRDFSYF) is a DNA-binding region (H-T-H motif). 91 to 96 (GCGNIG) contributes to the NAD(+) binding site.

This sequence belongs to the transcriptional regulatory Rex family. Homodimer.

The protein localises to the cytoplasm. Modulates transcription in response to changes in cellular NADH/NAD(+) redox state. This chain is Redox-sensing transcriptional repressor Rex, found in Streptococcus pyogenes serotype M12 (strain MGAS9429).